We begin with the raw amino-acid sequence, 151 residues long: Large ribosomal subunit protein bL9 (151 aa).

The protein belongs to the bacterial ribosomal protein bL9 family.

Binds to the 23S rRNA. The chain is Large ribosomal subunit protein bL9 from Prochlorococcus marinus (strain MIT 9312).